We begin with the raw amino-acid sequence, 161 residues long: 3-isopropylmalate dehydratase small subunit (161 aa).

It belongs to the LeuD family. LeuD type 2 subfamily. In terms of assembly, heterodimer of LeuC and LeuD.

It catalyses the reaction (2R,3S)-3-isopropylmalate = (2S)-2-isopropylmalate. Its pathway is amino-acid biosynthesis; L-leucine biosynthesis; L-leucine from 3-methyl-2-oxobutanoate: step 2/4. Catalyzes the isomerization between 2-isopropylmalate and 3-isopropylmalate, via the formation of 2-isopropylmaleate. The protein is 3-isopropylmalate dehydratase small subunit of Pyrobaculum islandicum (strain DSM 4184 / JCM 9189 / GEO3).